The primary structure comprises 450 residues: Glucose-6-phosphate isomerase (450 aa).

The Proton donor role is filled by E290. Catalysis depends on residues H311 and K425.

The protein belongs to the GPI family.

The protein resides in the cytoplasm. The enzyme catalyses alpha-D-glucose 6-phosphate = beta-D-fructose 6-phosphate. The protein operates within carbohydrate biosynthesis; gluconeogenesis. It participates in carbohydrate degradation; glycolysis; D-glyceraldehyde 3-phosphate and glycerone phosphate from D-glucose: step 2/4. Its function is as follows. Catalyzes the reversible isomerization of glucose-6-phosphate to fructose-6-phosphate. In Alkaliphilus metalliredigens (strain QYMF), this protein is Glucose-6-phosphate isomerase.